Here is a 166-residue protein sequence, read N- to C-terminus: uncharacterized protein (166 aa).

An N-acetylalanine modification is found at A2.

As to quaternary structure, homodimer.

This is an uncharacterized protein from Arabidopsis thaliana (Mouse-ear cress).